We begin with the raw amino-acid sequence, 371 residues long: 3-dehydroquinate synthase (371 aa).

NAD(+)-binding positions include 114–118 (GVVGD), 138–139 (TT), Lys151, Lys160, and 178–181 (TLNT). Residues Glu193, His258, and His275 each coordinate Zn(2+).

The protein belongs to the sugar phosphate cyclases superfamily. Dehydroquinate synthase family. Requires Co(2+) as cofactor. Zn(2+) serves as cofactor. It depends on NAD(+) as a cofactor.

It is found in the cytoplasm. The catalysed reaction is 7-phospho-2-dehydro-3-deoxy-D-arabino-heptonate = 3-dehydroquinate + phosphate. It participates in metabolic intermediate biosynthesis; chorismate biosynthesis; chorismate from D-erythrose 4-phosphate and phosphoenolpyruvate: step 2/7. Catalyzes the conversion of 3-deoxy-D-arabino-heptulosonate 7-phosphate (DAHP) to dehydroquinate (DHQ). The polypeptide is 3-dehydroquinate synthase (Synechococcus sp. (strain CC9605)).